Consider the following 162-residue polypeptide: D-aminoacyl-tRNA deacylase (162 aa).

Positions 143-144 (GP) match the Gly-cisPro motif, important for rejection of L-amino acids motif.

It belongs to the DTD family. In terms of assembly, homodimer.

It is found in the cytoplasm. The catalysed reaction is glycyl-tRNA(Ala) + H2O = tRNA(Ala) + glycine + H(+). It catalyses the reaction a D-aminoacyl-tRNA + H2O = a tRNA + a D-alpha-amino acid + H(+). Functionally, an aminoacyl-tRNA editing enzyme that deacylates mischarged D-aminoacyl-tRNAs. Also deacylates mischarged glycyl-tRNA(Ala), protecting cells against glycine mischarging by AlaRS. Acts via tRNA-based rather than protein-based catalysis; rejects L-amino acids rather than detecting D-amino acids in the active site. By recycling D-aminoacyl-tRNA to D-amino acids and free tRNA molecules, this enzyme counteracts the toxicity associated with the formation of D-aminoacyl-tRNA entities in vivo and helps enforce protein L-homochirality. This chain is D-aminoacyl-tRNA deacylase, found in Nitratidesulfovibrio vulgaris (strain ATCC 29579 / DSM 644 / CCUG 34227 / NCIMB 8303 / VKM B-1760 / Hildenborough) (Desulfovibrio vulgaris).